We begin with the raw amino-acid sequence, 271 residues long: Sulfur carrier protein FdhD (271 aa).

The active-site Cysteine persulfide intermediate is the cysteine 114.

Belongs to the FdhD family.

Its subcellular location is the cytoplasm. Required for formate dehydrogenase (FDH) activity. Acts as a sulfur carrier protein that transfers sulfur from IscS to the molybdenum cofactor prior to its insertion into FDH. This is Sulfur carrier protein FdhD from Agrobacterium fabrum (strain C58 / ATCC 33970) (Agrobacterium tumefaciens (strain C58)).